A 700-amino-acid chain; its full sequence is DNA ligase 2 (700 aa).

NAD(+) contacts are provided by residues 42-46 (DDAYD) and 89-90 (SL). Residue lysine 122 is the N6-AMP-lysine intermediate of the active site. Residues arginine 143, glutamate 177, lysine 303, and lysine 327 each coordinate NAD(+). 4 residues coordinate Zn(2+): cysteine 421, cysteine 424, cysteine 437, and cysteine 443. The disordered stretch occupies residues 590 to 621 (MTEPGATPPRPADTDGADGATAEAPGDGGPLA). One can recognise a BRCT domain in the interval 615 to 700 (GDGGPLAGMK…FAVLVAGLLS (86 aa)).

Belongs to the NAD-dependent DNA ligase family. LigA subfamily. It depends on Mg(2+) as a cofactor. The cofactor is Mn(2+).

The enzyme catalyses NAD(+) + (deoxyribonucleotide)n-3'-hydroxyl + 5'-phospho-(deoxyribonucleotide)m = (deoxyribonucleotide)n+m + AMP + beta-nicotinamide D-nucleotide.. Its function is as follows. DNA ligase that catalyzes the formation of phosphodiester linkages between 5'-phosphoryl and 3'-hydroxyl groups in double-stranded DNA using NAD as a coenzyme and as the energy source for the reaction. It is essential for DNA replication and repair of damaged DNA. The sequence is that of DNA ligase 2 from Streptomyces coelicolor (strain ATCC BAA-471 / A3(2) / M145).